A 165-amino-acid chain; its full sequence is Glutamyl-tRNA(Gln) amidotransferase subunit F, mitochondrial (165 aa).

Residues 1–19 (MKSILRSTTRNLITSSRRF) constitute a mitochondrion transit peptide.

Belongs to the GatF family. In terms of assembly, subunit of the heterotrimeric GatFAB amidotransferase (AdT) complex, composed of A, B and F subunits.

The protein resides in the mitochondrion inner membrane. It catalyses the reaction L-glutamyl-tRNA(Gln) + L-glutamine + ATP + H2O = L-glutaminyl-tRNA(Gln) + L-glutamate + ADP + phosphate + H(+). Functionally, allows the formation of correctly charged Gln-tRNA(Gln) through the transamidation of misacylated Glu-tRNA(Gln) in the mitochondria. The reaction takes place in the presence of glutamine and ATP through an activated gamma-phospho-Glu-tRNA(Gln). Required for proper protein synthesis within the mitochondrion. The sequence is that of Glutamyl-tRNA(Gln) amidotransferase subunit F, mitochondrial from Candida albicans (strain WO-1) (Yeast).